Consider the following 500-residue polypeptide: Trehalose-6-phosphate synthase (500 aa).

D-glucose 6-phosphate is bound at residue R28. 48-49 (GG) is a binding site for UDP-alpha-D-glucose. The D-glucose 6-phosphate site is built by Y108 and D162. Residues R304 and K309 each contribute to the UDP-alpha-D-glucose site. R342 provides a ligand contact to D-glucose 6-phosphate. UDP-alpha-D-glucose is bound at residue 407–411 (LVAKE).

This sequence belongs to the glycosyltransferase 20 family. As to quaternary structure, homotetramer.

The catalysed reaction is ADP-alpha-D-glucose + D-glucose 6-phosphate = alpha,alpha-trehalose 6-phosphate + ADP + H(+). The enzyme catalyses CDP-alpha-D-glucose + D-glucose 6-phosphate = alpha,alpha-trehalose 6-phosphate + CDP + H(+). It catalyses the reaction GDP-alpha-D-glucose + D-glucose 6-phosphate = alpha,alpha-trehalose 6-phosphate + GDP + H(+). It carries out the reaction TDP-alpha-D-glucose + D-glucose 6-phosphate = 5-methyl-UDP + alpha,alpha-trehalose 6-phosphate + H(+). The catalysed reaction is D-glucose 6-phosphate + UDP-alpha-D-glucose = alpha,alpha-trehalose 6-phosphate + UDP + H(+). It functions in the pathway glycan biosynthesis; trehalose biosynthesis. Probably involved in the osmoprotection via the biosynthesis of trehalose and in the production of glycogen and alpha-glucan via the TreS-Pep2 branch involved in the biosynthesis of maltose-1-phosphate (M1P). Catalyzes the transfer of glucose from UDP-glucose (UDP-Glc) to D-glucose 6-phosphate (Glc-6-P) to form trehalose-6-phosphate. Probably also able to use ADP-Glc, CDP-Glc, GDP-Glc and TDP-Glc as glucosyl donors. This chain is Trehalose-6-phosphate synthase, found in Mycobacterium tuberculosis (strain CDC 1551 / Oshkosh).